The sequence spans 174 residues: Peptide methionine sulfoxide reductase MsrA (174 aa).

The active site involves cysteine 10.

It belongs to the MsrA Met sulfoxide reductase family.

It carries out the reaction L-methionyl-[protein] + [thioredoxin]-disulfide + H2O = L-methionyl-(S)-S-oxide-[protein] + [thioredoxin]-dithiol. It catalyses the reaction [thioredoxin]-disulfide + L-methionine + H2O = L-methionine (S)-S-oxide + [thioredoxin]-dithiol. Its function is as follows. Has an important function as a repair enzyme for proteins that have been inactivated by oxidation. Catalyzes the reversible oxidation-reduction of methionine sulfoxide in proteins to methionine. The sequence is that of Peptide methionine sulfoxide reductase MsrA from Arthrobacter sp. (strain FB24).